A 397-amino-acid chain; its full sequence is 2-aminoadipate transaminase (397 aa).

G40 contributes to the substrate binding site. Pyridoxal 5'-phosphate is bound by residues Y70, 100–101 (SQ), N174, 202–205 (DDAY), 235–237 (SFS), and R245. Substrate is bound at residue N174. K263 carries the post-translational modification N6-(pyridoxal phosphate)lysine. R368 is a binding site for substrate.

Belongs to the class-I pyridoxal-phosphate-dependent aminotransferase family. Homodimer. It depends on pyridoxal 5'-phosphate as a cofactor.

It carries out the reaction L-2-aminoadipate + 2-oxoglutarate = 2-oxoadipate + L-glutamate. Its pathway is amino-acid biosynthesis; L-lysine biosynthesis via AAA pathway; L-alpha-aminoadipate from 2-oxoglutarate: step 5/5. Catalyzes the transfer of an amino group between 2-oxoadipate (2-OA) and glutamate (Glu) to yield alpha-aminodipate (AAA). It can also transaminate glutamate, leucine, and aromatic amino acids. It also contributes in the biosynthesis of other amino acids such as leucine. The protein is 2-aminoadipate transaminase (lysN) of Thermus thermophilus (strain ATCC BAA-163 / DSM 7039 / HB27).